The chain runs to 292 residues: Ribosomal protein L11 methyltransferase (292 aa).

T138, G159, D181, and N225 together coordinate S-adenosyl-L-methionine.

It belongs to the methyltransferase superfamily. PrmA family.

It is found in the cytoplasm. It carries out the reaction L-lysyl-[protein] + 3 S-adenosyl-L-methionine = N(6),N(6),N(6)-trimethyl-L-lysyl-[protein] + 3 S-adenosyl-L-homocysteine + 3 H(+). Methylates ribosomal protein L11. This is Ribosomal protein L11 methyltransferase from Leuconostoc citreum (strain KM20).